Here is a 194-residue protein sequence, read N- to C-terminus: ATP-dependent Clp protease proteolytic subunit (194 aa).

The Nucleophile role is filled by serine 98. Residue histidine 123 is part of the active site.

This sequence belongs to the peptidase S14 family. Component of the chloroplastic Clp protease core complex.

The protein localises to the plastid. Its subcellular location is the cyanelle. It carries out the reaction Hydrolysis of proteins to small peptides in the presence of ATP and magnesium. alpha-casein is the usual test substrate. In the absence of ATP, only oligopeptides shorter than five residues are hydrolyzed (such as succinyl-Leu-Tyr-|-NHMec, and Leu-Tyr-Leu-|-Tyr-Trp, in which cleavage of the -Tyr-|-Leu- and -Tyr-|-Trp bonds also occurs).. Its function is as follows. Cleaves peptides in various proteins in a process that requires ATP hydrolysis. Has a chymotrypsin-like activity. Plays a major role in the degradation of misfolded proteins. This is ATP-dependent Clp protease proteolytic subunit (clpP-A) from Cyanophora paradoxa.